The sequence spans 185 residues: Translation initiation factor IF-3 (185 aa).

Belongs to the IF-3 family. In terms of assembly, monomer.

It is found in the cytoplasm. In terms of biological role, IF-3 binds to the 30S ribosomal subunit and shifts the equilibrium between 70S ribosomes and their 50S and 30S subunits in favor of the free subunits, thus enhancing the availability of 30S subunits on which protein synthesis initiation begins. In Coxiella burnetii (strain RSA 493 / Nine Mile phase I), this protein is Translation initiation factor IF-3.